The chain runs to 1121 residues: Anillin (1121 aa).

Met1 carries the N-acetylmethionine modification. Residues 1–25 (MDPFTEKLLERTRARRENLQRKMAE) are compositionally biased toward basic and acidic residues. The segment at 1–45 (MDPFTEKLLERTRARRENLQRKMAERPTAVARSAPHAKRGREPLS) is required for ubiquitination. Disordered regions lie at residues 1–113 (MDPF…AAIS), 125–196 (ADRG…PVGR), and 212–402 (DDVS…TKAI). An interaction with CD2AP region spans residues 1–154 (MDPFTEKLLE…MQRLAEQRRH (154 aa)). Residues 1–228 (MDPFTEKLLE…AKQNSVQEQP (228 aa)) form a nuclear localization region. 2 positions are modified to phosphoserine: Ser73 and Ser96. Over residues 96 to 109 (SPMPAPRQAKPPAP) the composition is skewed to pro residues. Over residues 130–143 (NSGSEASATSSVKT) the composition is skewed to polar residues. A compositionally biased stretch (basic and acidic residues) spans 147–157 (RLAEQRRHWDS). Position 180 is a phosphoserine (Ser180). At Thr192 the chain carries Phosphothreonine. Residues 216 to 228 (HSSAKQNSVQEQP) show a composition bias toward polar residues. Residues Ser223, Ser250, and Ser259 each carry the phosphoserine modification. Residues 229 to 671 (GTACLSKSSS…RDLLYSIDAY (443 aa)) are interaction with F-actin. Residues 234–250 (SKSSSASGASASINSSS) are compositionally biased toward low complexity. Low complexity predominate over residues 282-298 (SASVSSSVKASSPVTAA). Over residues 303-314 (ENREAQNPELLH) the composition is skewed to basic and acidic residues. Phosphothreonine is present on Thr316. A phosphoserine mark is found at Ser318 and Ser334. At Thr359 the chain carries Phosphothreonine. An N6-acetyllysine modification is found at Lys366. Positions 368-384 (FLERFGERCQEHSKESP) are enriched in basic and acidic residues. The span at 391–401 (KTPNITPNTKA) shows a compositional bias: polar residues. A phosphothreonine mark is found at Thr392 and Thr396. 2 positions are modified to phosphoserine: Ser414 and Ser444. The segment at 490–511 (NEPAVKLSSTEPAGSTESEMTK) is disordered. Positions 496 to 511 (LSSTEPAGSTESEMTK) are enriched in polar residues. Ser513, Ser548, and Ser556 each carry phosphoserine. Residues 564 to 599 (FSDVLEEGELDVEKSQEEMDQVGAENSEEQEDALNI) are a coiled coil. Over residues 623-635 (SPPSELRDSNLSA) the composition is skewed to polar residues. A disordered region spans residues 623 to 656 (SPPSELRDSNLSAASPKPGKFQRTRVPRAESADS). Ser637, Ser653, Ser656, and Ser659 each carry phosphoserine. At Tyr666 the chain carries Phosphotyrosine. Ser673, Ser683, Ser787, and Ser924 each carry phosphoserine. A localization to the cleavage furrow region spans residues 725 to 1121 (QQTVIYQASQ…DACYKPVGKP (397 aa)). The region spanning 980-1104 (AVEEKGFLTI…WMQKLNQVIV (125 aa)) is the PH domain.

As to quaternary structure, interacts with F-actin. Interacts with CD2AP. May interact with RHOA. Interacts with FZR1/CDH1 during mitotic exit. Phosphorylated during mitosis. Post-translationally, ubiquitinated, and this requires FZR1/CDH1.

It is found in the nucleus. It localises to the cytoplasm. The protein localises to the cytoskeleton. Its subcellular location is the cell cortex. The protein resides in the cell projection. It is found in the bleb. Required for cytokinesis. Essential for the structural integrity of the cleavage furrow and for completion of cleavage furrow ingression. Plays a role in bleb assembly during metaphase and anaphase of mitosis. May play a significant role in podocyte cell migration. This chain is Anillin (Anln), found in Mus musculus (Mouse).